We begin with the raw amino-acid sequence, 310 residues long: Porphobilinogen deaminase (310 aa).

S-(dipyrrolylmethanemethyl)cysteine is present on C242.

This sequence belongs to the HMBS family. In terms of assembly, monomer. The cofactor is dipyrromethane.

It carries out the reaction 4 porphobilinogen + H2O = hydroxymethylbilane + 4 NH4(+). It functions in the pathway porphyrin-containing compound metabolism; protoporphyrin-IX biosynthesis; coproporphyrinogen-III from 5-aminolevulinate: step 2/4. Its function is as follows. Tetrapolymerization of the monopyrrole PBG into the hydroxymethylbilane pre-uroporphyrinogen in several discrete steps. In Shewanella baltica (strain OS195), this protein is Porphobilinogen deaminase.